A 792-amino-acid polypeptide reads, in one-letter code: Phenylalanine--tRNA ligase beta subunit (792 aa).

Residues 38 to 148 form the tRNA-binding domain; it reads NTKLAGFIVA…DDYKVGNKFF (111 aa). Residues 406–482 form the B5 domain; it reads EADTKVSFDY…RIYGYDKIKE (77 aa). Mg(2+) is bound by residues aspartate 460, aspartate 466, glutamate 469, and glutamate 470. Positions 698-790 constitute an FDX-ACB domain; the sequence is YKHQSVKRDF…VHKNTGGILR (93 aa).

This sequence belongs to the phenylalanyl-tRNA synthetase beta subunit family. Type 1 subfamily. As to quaternary structure, tetramer of two alpha and two beta subunits. It depends on Mg(2+) as a cofactor.

The protein localises to the cytoplasm. It catalyses the reaction tRNA(Phe) + L-phenylalanine + ATP = L-phenylalanyl-tRNA(Phe) + AMP + diphosphate + H(+). In Wolbachia sp. subsp. Brugia malayi (strain TRS), this protein is Phenylalanine--tRNA ligase beta subunit.